The chain runs to 435 residues: Trigger factor (435 aa).

Positions 125-147 (MEVPEQDTSVSDADVDSELENKR) are disordered. The region spanning 164-249 (GDTVVIDYEG…IHEVKEKQLP (86 aa)) is the PPIase FKBP-type domain.

The protein belongs to the FKBP-type PPIase family. Tig subfamily.

The protein localises to the cytoplasm. It carries out the reaction [protein]-peptidylproline (omega=180) = [protein]-peptidylproline (omega=0). In terms of biological role, involved in protein export. Acts as a chaperone by maintaining the newly synthesized protein in an open conformation. Functions as a peptidyl-prolyl cis-trans isomerase. The polypeptide is Trigger factor (Limosilactobacillus fermentum (strain NBRC 3956 / LMG 18251) (Lactobacillus fermentum)).